A 310-amino-acid polypeptide reads, in one-letter code: ADP-L-glycero-D-manno-heptose-6-epimerase (310 aa).

NADP(+) is bound by residues 10 to 11 (FI), 31 to 32 (DN), K38, K53, 75 to 79 (EGACS), and N92. Residue Y140 is the Proton acceptor of the active site. K144 contacts NADP(+). Substrate is bound at residue N169. 2 residues coordinate NADP(+): V170 and K178. The active-site Proton acceptor is K178. Substrate is bound by residues S180, H187, 201–204 (FEGS), R209, and Y272.

It belongs to the NAD(P)-dependent epimerase/dehydratase family. HldD subfamily. In terms of assembly, homopentamer. Requires NADP(+) as cofactor.

The enzyme catalyses ADP-D-glycero-beta-D-manno-heptose = ADP-L-glycero-beta-D-manno-heptose. Its pathway is nucleotide-sugar biosynthesis; ADP-L-glycero-beta-D-manno-heptose biosynthesis; ADP-L-glycero-beta-D-manno-heptose from D-glycero-beta-D-manno-heptose 7-phosphate: step 4/4. Catalyzes the interconversion between ADP-D-glycero-beta-D-manno-heptose and ADP-L-glycero-beta-D-manno-heptose via an epimerization at carbon 6 of the heptose. The sequence is that of ADP-L-glycero-D-manno-heptose-6-epimerase from Salmonella dublin (strain CT_02021853).